The following is a 220-amino-acid chain: DNA mismatch repair protein MutH (220 aa).

It belongs to the MutH family.

It is found in the cytoplasm. In terms of biological role, sequence-specific endonuclease that cleaves unmethylated GATC sequences. It is involved in DNA mismatch repair. This chain is DNA mismatch repair protein MutH, found in Buchnera aphidicola subsp. Baizongia pistaciae (strain Bp).